We begin with the raw amino-acid sequence, 358 residues long: Cyanide hydratase (358 aa).

The region spanning 8 to 287 (YKAAAVNAEP…QGLLFVDIDL (280 aa)) is the CN hydrolase domain. The active-site Proton acceptor is Glu48. Lys130 is a catalytic residue. The active-site Nucleophile is the Cys165.

It belongs to the carbon-nitrogen hydrolase superfamily. Nitrilase family. Oligomer of dimers, forming left-handed helical fibers.

It catalyses the reaction formamide = hydrogen cyanide + H2O. Its function is as follows. Catalyzes the hydration of cyanide to formamide. Degradation of cyanide may be important for plant pathogenic fungi in infection of cyanogenic plants. The sequence is that of Cyanide hydratase from Penicillium rubens (strain ATCC 28089 / DSM 1075 / NRRL 1951 / Wisconsin 54-1255) (Penicillium chrysogenum).